A 497-amino-acid polypeptide reads, in one-letter code: Protein nucleotidyltransferase YdiU (497 aa).

ATP-binding residues include G88, G90, R91, K110, D122, G123, R173, and R180. D249 acts as the Proton acceptor in catalysis. Residues N250 and D259 each contribute to the Mg(2+) site. Residue D259 coordinates ATP.

The protein belongs to the SELO family. Mg(2+) is required as a cofactor. The cofactor is Mn(2+).

It carries out the reaction L-seryl-[protein] + ATP = 3-O-(5'-adenylyl)-L-seryl-[protein] + diphosphate. The enzyme catalyses L-threonyl-[protein] + ATP = 3-O-(5'-adenylyl)-L-threonyl-[protein] + diphosphate. The catalysed reaction is L-tyrosyl-[protein] + ATP = O-(5'-adenylyl)-L-tyrosyl-[protein] + diphosphate. It catalyses the reaction L-histidyl-[protein] + UTP = N(tele)-(5'-uridylyl)-L-histidyl-[protein] + diphosphate. It carries out the reaction L-seryl-[protein] + UTP = O-(5'-uridylyl)-L-seryl-[protein] + diphosphate. The enzyme catalyses L-tyrosyl-[protein] + UTP = O-(5'-uridylyl)-L-tyrosyl-[protein] + diphosphate. Its function is as follows. Nucleotidyltransferase involved in the post-translational modification of proteins. It can catalyze the addition of adenosine monophosphate (AMP) or uridine monophosphate (UMP) to a protein, resulting in modifications known as AMPylation and UMPylation. The chain is Protein nucleotidyltransferase YdiU from Methylorubrum extorquens (strain CM4 / NCIMB 13688) (Methylobacterium extorquens).